The following is a 277-amino-acid chain: Putative phosphoenolpyruvate synthase regulatory protein (277 aa).

An ADP-binding site is contributed by 157-164 (GVSRCGKT).

The protein belongs to the pyruvate, phosphate/water dikinase regulatory protein family. PSRP subfamily.

It catalyses the reaction [pyruvate, water dikinase] + ADP = [pyruvate, water dikinase]-phosphate + AMP + H(+). It carries out the reaction [pyruvate, water dikinase]-phosphate + phosphate + H(+) = [pyruvate, water dikinase] + diphosphate. Bifunctional serine/threonine kinase and phosphorylase involved in the regulation of the phosphoenolpyruvate synthase (PEPS) by catalyzing its phosphorylation/dephosphorylation. The chain is Putative phosphoenolpyruvate synthase regulatory protein from Enterobacter sp. (strain 638).